Consider the following 399-residue polypeptide: Odorant receptor 42b (399 aa).

At 1–45 the chain is on the cytoplasmic side; the sequence is MVFELIRPAPLTEQKRSRDGCIYLYRAMKFIGWLPPKQGVLRYVY. The chain crosses the membrane as a helical span at residues 46–66; sequence LTWTLMTFVWCTTYLPLGFLG. Over 67–83 the chain is Extracellular; it reads SYMTQIKSFSPGEFLTS. The helical transmembrane segment at 84-104 threads the bilayer; sequence LQVCINAYGSSVKVAITYSML. Over 105 to 140 the chain is Cytoplasmic; it reads WRLIKAKNILDQLDLRCTAMEEREKIHLVVARSNHA. Residues 141-161 form a helical membrane-spanning segment; the sequence is FLIFTFVYCGYAGSTYLSSVL. At 162 to 178 the chain is on the extracellular side; sequence SGRPPWQLYNPFIDWHD. The helical transmembrane segment at 179-199 threads the bilayer; it reads GTLKLWVASTLEYMVMSGAVL. The Cytoplasmic portion of the chain corresponds to 200 to 268; the sequence is QDQLSDSYPL…AIIKPVIQGT (69 aa). The chain crosses the membrane as a helical span at residues 269–289; the sequence is IFTQFLLIGLVLGFTLINVFF. Residues 290-292 lie on the Extracellular side of the membrane; it reads FSD. Residues 293–313 form a helical membrane-spanning segment; the sequence is IWTGIASFMFVITILLQTFPF. Topologically, residues 314 to 356 are cytoplasmic; sequence CYTCNLIMEDCESLTHAIFQSNWVDASRRYKTTLLYFLQNVQQ. The helical transmembrane segment at 357–377 threads the bilayer; that stretch reads PIVFIAGGIFQISMSSNISVA. At 378–399 the chain is on the extracellular side; it reads KFAFSVITITKQMNIADKFKTD.

The protein belongs to the insect chemoreceptor superfamily. Heteromeric odorant receptor channel (TC 1.A.69) family. Or2a subfamily. In terms of assembly, interacts with Orco. Complexes exist early in the endomembrane system in olfactory sensory neurons (OSNs), coupling these complexes to the conserved ciliary trafficking pathway. As to expression, expressed in olfactory sensory neurons in the antenna.

It is found in the cell membrane. Odorant receptor which mediates acceptance or avoidance behavior, depending on its substrates. The odorant receptor repertoire encodes a large collection of odor stimuli that vary widely in identity, intensity, and duration. May form a complex with Orco to form odorant-sensing units, providing sensitive and prolonged odorant signaling and calcium permeability. Involved in the behavioral responses to ethyl acetate and pentyl acetate. This is Odorant receptor 42b (Or42b) from Drosophila melanogaster (Fruit fly).